The primary structure comprises 434 residues: UDP-N-acetylmuramoylalanine--D-glutamate ligase (434 aa).

An ATP-binding site is contributed by 117-123; the sequence is GTNGKST.

This sequence belongs to the MurCDEF family.

Its subcellular location is the cytoplasm. It catalyses the reaction UDP-N-acetyl-alpha-D-muramoyl-L-alanine + D-glutamate + ATP = UDP-N-acetyl-alpha-D-muramoyl-L-alanyl-D-glutamate + ADP + phosphate + H(+). The protein operates within cell wall biogenesis; peptidoglycan biosynthesis. Cell wall formation. Catalyzes the addition of glutamate to the nucleotide precursor UDP-N-acetylmuramoyl-L-alanine (UMA). The chain is UDP-N-acetylmuramoylalanine--D-glutamate ligase from Sphingopyxis alaskensis (strain DSM 13593 / LMG 18877 / RB2256) (Sphingomonas alaskensis).